The sequence spans 256 residues: N-glycosylase/DNA lyase (256 aa).

3 residues coordinate 8-oxoguanine: Gln-31, Ser-58, and Trp-69. Residues Thr-125–Leu-184 are helix-hairpin-helix. The active-site Schiff-base intermediate with DNA is Lys-140. Positions 144 and 170 each coordinate 8-oxoguanine. Asp-172 is a catalytic residue. 8-oxoguanine contacts are provided by Asp-218 and Trp-222.

Belongs to the archaeal N-glycosylase/DNA lyase (AGOG) family.

The catalysed reaction is 2'-deoxyribonucleotide-(2'-deoxyribose 5'-phosphate)-2'-deoxyribonucleotide-DNA = a 3'-end 2'-deoxyribonucleotide-(2,3-dehydro-2,3-deoxyribose 5'-phosphate)-DNA + a 5'-end 5'-phospho-2'-deoxyribonucleoside-DNA + H(+). In terms of biological role, DNA repair enzyme that is part of the base excision repair (BER) pathway; protects from oxidative damage by removing the major product of DNA oxidation, 8-oxoguanine (GO), from single- and double-stranded DNA substrates. The sequence is that of N-glycosylase/DNA lyase from Pyrobaculum aerophilum (strain ATCC 51768 / DSM 7523 / JCM 9630 / CIP 104966 / NBRC 100827 / IM2).